The chain runs to 279 residues: Glycerol uptake facilitator protein (279 aa).

Over 1–8 the chain is Cytoplasmic; that stretch reads MTTAAPTP. The helical transmembrane segment at 9-37 threads the bilayer; it reads SLFGQCLAEFLGTALLIFFGTGCVAALKV. At 38–42 the chain is on the periplasmic side; that stretch reads AGASF. A helical transmembrane segment spans residues 43–63; it reads GLWEISIIWGVGVSMAIYLSA. Residues 64-66 lie on the Cytoplasmic side of the membrane; it reads GVS. An intramembrane segment occupies 67–70; it reads GAHL. The NPA 1 signature appears at 71-73; that stretch reads NPA. Residues 71–81 constitute an intramembrane region (helical); sequence NPAVSIALWLF. The Cytoplasmic segment spans residues 82–87; the sequence is AGFEGR. The chain crosses the membrane as a helical span at residues 88–111; the sequence is KLPFYITAQVAGAFCAAALVYTLY. Residues 112–146 lie on the Periplasmic side of the membrane; sequence SSLFIEFEQAQNIVRGSQDSLALASVFSTYPHPAL. Residues 147-172 traverse the membrane as a helical segment; that stretch reads SVGQAFLVEVVITAILMAVIMALTDD. Residues 173–180 lie on the Cytoplasmic side of the membrane; it reads GNGLPRGP. A helical transmembrane segment spans residues 181–197; the sequence is LAPLLIGLLIAVIGSAM. Over 198–201 the chain is Periplasmic; it reads GPLT. The stretch at 202–205 is an intramembrane region; sequence GFAM. An NPA 2 motif is present at residues 206-208; sequence NPA. Positions 206 to 219 form an intramembrane region, helical; sequence NPARDFGPKLMTYL. At 220-234 the chain is on the periplasmic side; the sequence is AGWGPIAFTGGREIP. Residues 235–257 traverse the membrane as a helical segment; it reads YFLVPIFAPILGACLGAGGYRVL. The Cytoplasmic portion of the chain corresponds to 258–279; the sequence is IARHLPSAAAPAEAEPEKVRAS.

It belongs to the MIP/aquaporin (TC 1.A.8) family.

Its subcellular location is the cell inner membrane. The enzyme catalyses glycerol(in) = glycerol(out). Functionally, mediates glycerol diffusion across the cytoplasmic membrane via a pore-type mechanism. This Pseudomonas aeruginosa (strain ATCC 15692 / DSM 22644 / CIP 104116 / JCM 14847 / LMG 12228 / 1C / PRS 101 / PAO1) protein is Glycerol uptake facilitator protein (glpF).